Here is a 326-residue protein sequence, read N- to C-terminus: Acetyl-coenzyme A carboxylase carboxyl transferase subunit beta (326 aa).

Positions 25-308 constitute a CoA carboxyltransferase N-terminal domain; it reads LWVKCPASGE…RRDDRSTLQL (284 aa). A disordered region spans residues 298–326; sequence RRRDDRSTLQLTPPKTHAPKPPEPKVKPD. Residues 317-326 show a composition bias toward basic and acidic residues; it reads KPPEPKVKPD.

It belongs to the AccD/PCCB family. In terms of assembly, acetyl-CoA carboxylase is a heterohexamer composed of biotin carboxyl carrier protein (AccB), biotin carboxylase (AccC) and two subunits each of ACCase subunit alpha (AccA) and ACCase subunit beta (AccD).

The protein localises to the cytoplasm. It catalyses the reaction N(6)-carboxybiotinyl-L-lysyl-[protein] + acetyl-CoA = N(6)-biotinyl-L-lysyl-[protein] + malonyl-CoA. Its pathway is lipid metabolism; malonyl-CoA biosynthesis; malonyl-CoA from acetyl-CoA: step 1/1. In terms of biological role, component of the acetyl coenzyme A carboxylase (ACC) complex. Biotin carboxylase (BC) catalyzes the carboxylation of biotin on its carrier protein (BCCP) and then the CO(2) group is transferred by the transcarboxylase to acetyl-CoA to form malonyl-CoA. The protein is Acetyl-coenzyme A carboxylase carboxyl transferase subunit beta of Hyphomonas neptunium (strain ATCC 15444).